The primary structure comprises 358 residues: Cyclin-D1-binding protein 1 (358 aa).

2 interaction with TCF3 regions span residues 1–183 (MESA…VDLV) and 149–358 (ISYN…EVES). Interaction with RPLP0 regions lie at residues 1–189 (MESA…AHEE) and 238–358 (LIIP…EVES). The interval 1 to 207 (MESAAVSAAP…DPYCGLLNDI (207 aa)) is required for interaction with CCND1.

This sequence belongs to the CCNDBP1 family. Interacts with CCND1 and GRAP2. May also interact with COPS5, RPLP0, SIRT6, SYF2 and TCF3. Phosphorylated.

Its subcellular location is the cytoplasm. The protein localises to the nucleus. Its function is as follows. May negatively regulate cell cycle progression. May act at least in part via inhibition of the cyclin-D1/CDK4 complex, thereby preventing phosphorylation of RB1 and blocking E2F-dependent transcription. This chain is Cyclin-D1-binding protein 1 (CCNDBP1), found in Bos taurus (Bovine).